A 33-amino-acid chain; its full sequence is Alpha-amanitin proprotein (33 aa).

The propeptide occupies Met-1–Pro-10. Ile-11 is subject to (3R,4R)-4,5-dihydroxyisoleucine; in form alpha-amanitin. Ile-11 is subject to (3R,4S)-4-hydroxyisoleucine; in form gamma-amanitin. Positions Ile-11–Pro-18 form a cross-link, cyclopeptide (Ile-Pro). Residues Trp-12–Cys-16 constitute a cross-link (2'-cysteinyl-6'-hydroxytryptophan sulfoxide (Trp-Cys)). Pro-18 carries the post-translational modification 4-hydroxyproline. Residues Cys-19–Ala-33 constitute a propeptide that is removed on maturation.

Belongs to the MSDIN fungal toxin family. Processed by the macrocyclase-peptidase enzyme POPB to yield a toxic cyclic decapeptide. POPB first removes 10 residues from the N-terminus. Conformational trapping of the remaining peptide forces the enzyme to release this intermediate rather than proceed to macrocyclization. The enzyme rebinds the remaining peptide in a different conformation and catalyzes macrocyclization of the N-terminal 8 residues.

Major toxin belonging to the bicyclic octapeptides amatoxins that acts by binding non-competitively to RNA polymerase II and greatly slowing the elongation of transcripts from target promoters. This is Alpha-amanitin proprotein from Amanita fuligineoides.